The following is a 376-amino-acid chain: 1-deoxy-D-xylulose 5-phosphate reductoisomerase (376 aa).

NADPH contacts are provided by Thr-12, Gly-13, Ser-14, Ile-15, Arg-39, Gln-40, and Asn-110. Residue Lys-111 participates in 1-deoxy-D-xylulose 5-phosphate binding. Glu-112 lines the NADPH pocket. Asp-136 contacts Mn(2+). Residues Ser-137, Glu-138, Ser-162, and His-185 each contribute to the 1-deoxy-D-xylulose 5-phosphate site. Mn(2+) is bound at residue Glu-138. Gly-191 serves as a coordination point for NADPH. Residues Ser-198, Asn-203, Lys-204, and Glu-207 each coordinate 1-deoxy-D-xylulose 5-phosphate. Position 207 (Glu-207) interacts with Mn(2+).

Belongs to the DXR family. It depends on Mg(2+) as a cofactor. The cofactor is Mn(2+).

It catalyses the reaction 2-C-methyl-D-erythritol 4-phosphate + NADP(+) = 1-deoxy-D-xylulose 5-phosphate + NADPH + H(+). It participates in isoprenoid biosynthesis; isopentenyl diphosphate biosynthesis via DXP pathway; isopentenyl diphosphate from 1-deoxy-D-xylulose 5-phosphate: step 1/6. Catalyzes the NADPH-dependent rearrangement and reduction of 1-deoxy-D-xylulose-5-phosphate (DXP) to 2-C-methyl-D-erythritol 4-phosphate (MEP). The chain is 1-deoxy-D-xylulose 5-phosphate reductoisomerase from Treponema pallidum (strain Nichols).